The primary structure comprises 404 residues: MQIGQRIGTPLSESATRVMLLGAGELGKEVIIALQRLGVEVIAVDRYPNAPGHQVAHRAHVIDMTDRAALRALVEQERPHLIVPEIEAIATDELAAIESAGLAEVIPTARATQLTMNREGIRRLAAEELGLPTSPYAFADSLDELRAGIAKVGYPCVVKPVMSSSGKGQSVLRGDADVEPAWQYAMAGGRVNHGRVIVEGFIDFEYEITQLTVRAINPASGEVSTYFCDPIGHVQVAGDYVESWQPQPMSPLALERSREVAHKVTAALGGRGLFGVELFVRGDDVWFSEVSPRPHDTGLVTLCSQRFSEFELHARAILGLPVDTSLRAPGASAVIYGGLDEAGIAFEGVAAALAVPNADLRLFGKPESFVKRRMGVALATGETTDEARSRAKQAAAAVRPVSAK.

Residues 25 to 26 and Glu-85 each bind N(1)-(5-phospho-beta-D-ribosyl)glycinamide; that span reads EL. Residues Arg-118, Lys-159, 164-169, 199-202, and Glu-207 contribute to the ATP site; these read SSGKGQ and EGFI. Positions 123-318 constitute an ATP-grasp domain; that stretch reads RLAAEELGLP…EFELHARAIL (196 aa). Residues Glu-277 and Glu-289 each coordinate Mg(2+). Residues Asp-296, Lys-365, and 372–373 contribute to the N(1)-(5-phospho-beta-D-ribosyl)glycinamide site; that span reads RR. A disordered region spans residues 384–404; that stretch reads TDEARSRAKQAAAAVRPVSAK. The segment covering 392-404 has biased composition (low complexity); the sequence is KQAAAAVRPVSAK.

This sequence belongs to the PurK/PurT family. In terms of assembly, homodimer.

The catalysed reaction is N(1)-(5-phospho-beta-D-ribosyl)glycinamide + formate + ATP = N(2)-formyl-N(1)-(5-phospho-beta-D-ribosyl)glycinamide + ADP + phosphate + H(+). The protein operates within purine metabolism; IMP biosynthesis via de novo pathway; N(2)-formyl-N(1)-(5-phospho-D-ribosyl)glycinamide from N(1)-(5-phospho-D-ribosyl)glycinamide (formate route): step 1/1. In terms of biological role, involved in the de novo purine biosynthesis. Catalyzes the transfer of formate to 5-phospho-ribosyl-glycinamide (GAR), producing 5-phospho-ribosyl-N-formylglycinamide (FGAR). Formate is provided by PurU via hydrolysis of 10-formyl-tetrahydrofolate. This Paraburkholderia xenovorans (strain LB400) protein is Formate-dependent phosphoribosylglycinamide formyltransferase.